Reading from the N-terminus, the 278-residue chain is HTH-type transcriptional regulator HdfR (278 aa).

The HTH lysR-type domain occupies 1–58 (MDTELLKTFLEVSRTRHFGRAAEALYLTQSAVSFRIRQLENQLGVNLFTRHRNNIRLT). A DNA-binding region (H-T-H motif) is located at residues 18–37 (FGRAAEALYLTQSAVSFRIR).

The protein belongs to the LysR transcriptional regulatory family.

Functionally, negatively regulates the transcription of the flagellar master operon flhDC by binding to the upstream region of the operon. In Salmonella dublin (strain CT_02021853), this protein is HTH-type transcriptional regulator HdfR.